Consider the following 392-residue polypeptide: MSVRESFNPESYELDKNFRLTRFTELKGTGCKVPQDVLQKLLESLQENHYQEDEQFLGAVMPRLGIGMDTCVIPLRHGGLSLVQTTDYIYPIVDDPYMMGRIACANVLSDLYAMGVTECDNMLMLLGVSNKLTEKERDKVMPLVIQGFKDASEEAGTSVTGGQTVINPWIVLGGVATTVCQPNEFIMPDNAVPGDVLVLTKPLGTQVAVAVHQWLDIPEKWNKIKLVVTQEDVELAYQEAMLNMARLNRTAAGLMHTFNAHAATDITGFGILGHAQNLARQQRTEVSFVIHNLPVLAKMAAVSKACGNMFGLMHGTCPETSGGLLICLPREQAARFCAEIKSPKYGEGHQAWIIGIVEKGNRTARIIDKPRIIEVAPQVATQNVNTTPGATS.

Cys31 is an active-site residue. ATP contacts are provided by residues Lys32, 67–69 (GMD), Asp87, Asp110, and 161–164 (GGQT). Asp69 lines the Mg(2+) pocket. Asp110 serves as a coordination point for Mg(2+). Residue Asp265 participates in Mg(2+) binding. Thr387 bears the Phosphothreonine mark.

It belongs to the selenophosphate synthase 1 family. Class II subfamily. As to quaternary structure, homodimer. The cofactor is Mg(2+).

Its subcellular location is the cell membrane. The protein localises to the nucleus membrane. It catalyses the reaction hydrogenselenide + ATP + H2O = selenophosphate + AMP + phosphate + 2 H(+). Synthesizes selenophosphate from selenide and ATP. The sequence is that of Selenide, water dikinase 1 (sephs1) from Danio rerio (Zebrafish).